Here is a 78-residue protein sequence, read N- to C-terminus: Large ribosomal subunit protein bL28 (78 aa).

It belongs to the bacterial ribosomal protein bL28 family.

In Prochlorococcus marinus (strain MIT 9211), this protein is Large ribosomal subunit protein bL28.